The chain runs to 111 residues: Small ribosomal subunit protein bS6 (111 aa).

It belongs to the bacterial ribosomal protein bS6 family.

Functionally, binds together with bS18 to 16S ribosomal RNA. The polypeptide is Small ribosomal subunit protein bS6 (Francisella tularensis subsp. tularensis (strain FSC 198)).